Reading from the N-terminus, the 421-residue chain is Trimethyllysine dioxygenase, mitochondrial (421 aa).

The N-terminal 15 residues, 1 to 15 (MWYHRLSHLHSRLQD), are a transit peptide targeting the mitochondrion. 2 positions are modified to N6-acetyllysine: lysine 179 and lysine 236. Fe cation is bound by residues histidine 242, aspartate 244, and histidine 389.

It belongs to the gamma-BBH/TMLD family. Homodimer. The cofactor is Fe(2+). Requires L-ascorbate as cofactor. As to expression, all isoforms, but isoform 8, are widely expressed in adult and fetal tissues. Isoform 8 is restricted to heart and skeletal muscle.

It localises to the mitochondrion matrix. It catalyses the reaction N(6),N(6),N(6)-trimethyl-L-lysine + 2-oxoglutarate + O2 = (3S)-3-hydroxy-N(6),N(6),N(6)-trimethyl-L-lysine + succinate + CO2. The protein operates within amine and polyamine biosynthesis; carnitine biosynthesis. Converts trimethyllysine (TML) into hydroxytrimethyllysine (HTML). This is Trimethyllysine dioxygenase, mitochondrial (TMLHE) from Homo sapiens (Human).